Consider the following 824-residue polypeptide: MSSLLNFYRKVLNVPLSLLVKSRAIPTDPVKELNLNLEQPIIYVLPYTSQTDLLILQKNCLSLNLPDPLQNNELNGQSLPRYVFLDEGRRFFKSKGAKSETESIFYRYLDLHRNNESLDVQLIPASVLWGRSPGKESEPHLRLMSSFQRIISMIWFGRDNFVRFSQALSLKYMVAEHGADEGIAQKLARVAKIHFAKQRYSAMGPRLPDRQAMFNKIIQSPAIKAAIEEEAKTKKISIEKARQEAEKIVNEIAADVSHESLRIADRVLSWLWNKLYQGINVQNGDRVRKLALEGHEIVYVPCHRSHMDYLLLSYLLYHQGLVPPHIAAGINLNFFPAGPIFRSWGAFFIRRTFKGNRLYSTIFREYLAELFYRGYSVEYFIEGGRSRTGRLLEPKTGMMSMTLQALQRGLTRPISIVPVYIGYEHVLEVDTYAKELRGAEKEKENAGLVLRVIKKLKNLGQCYVNFAEPIQVNNYLNQHFPEWKESQAEDSRPKWLNEAVDSVAHQVMININKAAAINAKNLIGSVLLASRQRALAREQLIEQVDSYLQLFKNVSYSDDVIVPNDSAEEMLNHVLTLPRSGVISEKDSFGEMIRLDRESAVLMTYYRNNIQHLFVLPSLVASIILHHESVSKDLIIKTVNRIYPFLKAELFLHFEENDVRNQVEAILTEFSAQRIVKYESDVLQINRARVRALQLHAAGVREILQRYYISLSILLEHPEISRAALEKESRSIAQRLSILHGINAPEFFDKALFSTFSASLKAQGYFDSEGNCILEKAKEAEEILRSLISVEVQLTIQGAMEKVEEVENTETVVKTAEAVTEKNE.

The HXXXXD motif signature appears at 302-307 (CHRSHM).

This sequence belongs to the GPAT/DAPAT family.

The protein localises to the cell inner membrane. It carries out the reaction sn-glycerol 3-phosphate + an acyl-CoA = a 1-acyl-sn-glycero-3-phosphate + CoA. It participates in phospholipid metabolism; CDP-diacylglycerol biosynthesis; CDP-diacylglycerol from sn-glycerol 3-phosphate: step 1/3. This chain is Glycerol-3-phosphate acyltransferase, found in Actinobacillus pleuropneumoniae serotype 3 (strain JL03).